The following is a 169-amino-acid chain: Large ribosomal subunit protein uL5 (169 aa).

This sequence belongs to the universal ribosomal protein uL5 family. Part of the 50S ribosomal subunit; contacts the 5S rRNA and probably tRNA. Forms a bridge to the 30S subunit in the 70S ribosome.

Its function is as follows. This is one of the proteins that bind and probably mediate the attachment of the 5S RNA into the large ribosomal subunit, where it forms part of the central protuberance. In the 70S ribosome it contacts protein S13 of the 30S subunit (bridge B1b), connecting the 2 subunits; this bridge is implicated in subunit movement. May contact the P site tRNA; the 5S rRNA and some of its associated proteins might help stabilize positioning of ribosome-bound tRNAs. The sequence is that of Large ribosomal subunit protein uL5 from Nanoarchaeum equitans (strain Kin4-M).